The following is a 123-amino-acid chain: Methylmalonyl-CoA carboxyltransferase 1.3S subunit (123 aa).

The Biotinyl-binding domain maps to 46–123; that stretch reads GAGAGKAGEG…QGGQGLIKIG (78 aa). Lysine 89 is subject to N6-biotinyllysine.

Transcarboxylase is composed of three subunits: 1.3S, 5S, and 12S. The core of the enzyme is composed of six 12S subunits. On each side of the core there are three pairs of 5S subunits. Each 5S dimer is attached to the core by two 1.3S subunits. Thus the total number of chains is 30 (6 + 12 + 12).

The catalysed reaction is (S)-methylmalonyl-CoA + pyruvate = propanoyl-CoA + oxaloacetate. In terms of biological role, the biotinyl 1.3S subunit serves as a carboxyl carrier between the substrate-binding sites on the 12S and 5S subunits. The protein is Methylmalonyl-CoA carboxyltransferase 1.3S subunit of Propionibacterium freudenreichii subsp. shermanii.